The following is a 161-amino-acid chain: Lectin-like protein EP153R (161 aa).

At 1 to 30 (MFSNKKYIGLIDKYCEKKILDDSSTIKICY) the chain is on the cytoplasmic side. Residues 31–51 (ILIGILIGTNMITLIYNFIFW) traverse the membrane as a helical segment. Over 52–161 (ENYITCNQKD…HVSLLYICSK (110 aa)) the chain is Extracellular. Residues C66 and C77 are joined by a disulfide bond. Positions 66–160 (CPKDWVGYNN…KHVSLLYICS (95 aa)) are lectin-like. Residues N89, N98, N104, N110, N116, N130, and N136 are each glycosylated (N-linked (GlcNAc...) asparagine; by host). C94 and C159 are joined by a disulfide.

It belongs to the asfivirus lectin-like protein family. As to quaternary structure, homodimer.

It is found in the host endoplasmic reticulum membrane. Its function is as follows. Down-regulates MHC-I expression by impairing the appropriate configuration or presentation into the plasma membrane of the latter. Participates in viral hemadsorption, which may help viral spread. Reduces the transactivating activity of host TP53, thus inhibiting apoptosis. Non-essential for virus growth in swine macrophage cell cultures. The sequence is that of Lectin-like protein EP153R from African swine fever virus (isolate Tick/Malawi/Lil 20-1/1983) (ASFV).